The following is a 100-amino-acid chain: MKYVALAFVLSLVILQISAQVGAAYIPGMGSIGSVGRAGAAAGASAGIGNQGRGAGLLRFFTLILENLMKNNQQAQPKQDNFGAQLQNLLKKKMILEMIN.

The signal sequence occupies residues 1-23 (MKYVALAFVLSLVILQISAQVGA).

In terms of tissue distribution, nacreous layer of shell (at protein level). Expressed primarily in the mantle with highest level in the mantle pallium and lower level in the mantle edge.

The protein resides in the secreted. This is an uncharacterized protein from Margaritifera margaritifera (Freshwater pearl mussel).